A 1265-amino-acid polypeptide reads, in one-letter code: Methionine synthase (1265 aa).

Residues 19-338 (QDEIEAILQE…DHIREIAEAV (320 aa)) form the Hcy-binding domain. Zn(2+)-binding residues include Cys260, Cys323, and Cys324. A Pterin-binding domain is found at 371-632 (FVNIGERCNV…IHKELLQLCE (262 aa)). (6S)-5,6,7,8-tetrahydrofolate contacts are provided by residues 382–384 (GSR), Asp449, Asn470, Asp537, Asn579, Arg585, and Arg591. Positions 662-759 (QTDEWRNGPL…FMEKEREETK (98 aa)) constitute a B12-binding N-terminal domain. Methylcob(III)alamin is bound by residues Glu709, 782 to 786 (GDVHD), His785, Ser830, Thr834, and Ala886. The region spanning 772–907 (QGTIVLATVK…DENLKDEYFE (136 aa)) is the B12-binding domain. One can recognise an AdoMet activation domain in the interval 923–1265 (SLKERRYLTL…LGPILGYDTD (343 aa)). Residues Asp974, Arg1172, and 1227-1228 (YF) contribute to the S-adenosyl-L-methionine site. Thr1264 bears the Phosphothreonine mark.

This sequence belongs to the vitamin-B12 dependent methionine synthase family. As to quaternary structure, monomer. Dimer. Forms a multiprotein complex with MMACHC, MMADHC and MTRR. It depends on methylcob(III)alamin as a cofactor. Requires Zn(2+) as cofactor.

The protein resides in the cytoplasm. It carries out the reaction (6S)-5-methyl-5,6,7,8-tetrahydrofolate + L-homocysteine = (6S)-5,6,7,8-tetrahydrofolate + L-methionine. It participates in amino-acid biosynthesis; L-methionine biosynthesis via de novo pathway; L-methionine from L-homocysteine (MetH route): step 1/1. Its function is as follows. Catalyzes the transfer of a methyl group from methylcob(III)alamin (MeCbl) to homocysteine, yielding enzyme-bound cob(I)alamin and methionine in the cytosol. MeCbl is an active form of cobalamin (vitamin B12) used as a cofactor for methionine biosynthesis. Cob(I)alamin form is regenerated to MeCbl by a transfer of a methyl group from 5-methyltetrahydrofolate. The processing of cobalamin in the cytosol occurs in a multiprotein complex composed of at least MMACHC, MMADHC, MTRR (methionine synthase reductase) and MTR which may contribute to shuttle safely and efficiently cobalamin towards MTR in order to produce methionine. This is Methionine synthase (MTR) from Bos taurus (Bovine).